Consider the following 343-residue polypeptide: MAIASNVVEAGNAVRAEKGRKYFYFRKMIGDYIDTSIRIVATVFLADLLLRLYRCVVEYGSNGRYYLPEDRLWIILRRSCTYNNRSIYLIVGFLLVAFFRISVTGNYRNVMPTTLFLFQMPLYWIWSFTDMDQSTLSYSHWIRDSHGLDYAAGMASNYFHGYLKLSLPERKDDGLKHRLAMYEDKNNVTFGIKRLVILIPDEMFVNGVLESHLLDKAEPLETQFINRAGVYRPFKHDVYRMNKKVNGRTYYFAVEGATPMISFFDATYSNLSGTWQMQELKREIWIKFYKHLKELITTWPETRDLVELIIYNSHDSKGNLVDVGELLVAHMQNKTKTIDEISN.

N-linked (GlcNAc...) asparagine glycosylation is present at Asn-84. Transmembrane regions (helical) follow at residues 87-107 (IYLI…TGNY) and 109-129 (NVMP…WSFT). Asn-157 lines the 3',2'-cGAMP pocket. The N-linked (GlcNAc...) asparagine glycan is linked to Asn-187. Residues 195–215 (LVILIPDEMFVNGVLESHLLD) form a helical membrane-spanning segment. 5 residues coordinate 3',2'-cGAMP: Arg-232, Lys-235, Glu-255, Thr-258, and Ser-262. Asn-270 and Asn-333 each carry an N-linked (GlcNAc...) asparagine glycan.

Belongs to the STING family.

The protein localises to the endoplasmic reticulum membrane. Facilitator of innate immune signaling that binds cyclic dinucleotides produced in response to infection by bacteria and/or viruses, and promotes the activation of the NF-kappa-B transcription factor Rel (Relish). Recognizes and binds cyclic di-GMP (c-di-GMP), a cyclic dinucleotide messenger produced by bacteria such as L.monocytogenes, leading to activation of the peptidoglycan recognition protein (IMD) signaling pathway and activation of Rel (Relish). Innate immune response is triggered in response to double-stranded RNA from viruses delivered to the cytoplasm: Sting acts by specifically binding cyclic dinucleotides 3',2'-cGAMP and 2',3'-cGAMP produced by cGlr1 and cGlr2 in response to RNA virus in the cytosol. Has a strong preference for 3',2'-cGAMP compared to other cyclic dinucleotides such as 2',3'-cGAMP or 3'3'-c-di-GMP. Upon binding to 3',2'-cGAMP, activates an antiviral immune response, leading to the activation of Rel (Relish). Activated in brain in response to Zika virus infection, leading to autophagy. In Drosophila melanogaster (Fruit fly), this protein is Stimulator of interferon genes protein homolog.